The chain runs to 318 residues: Transaldolase (318 aa).

The active-site Schiff-base intermediate with substrate is Lys132.

This sequence belongs to the transaldolase family. Type 1 subfamily. Homodimer.

The protein resides in the cytoplasm. It catalyses the reaction D-sedoheptulose 7-phosphate + D-glyceraldehyde 3-phosphate = D-erythrose 4-phosphate + beta-D-fructose 6-phosphate. It participates in carbohydrate degradation; pentose phosphate pathway; D-glyceraldehyde 3-phosphate and beta-D-fructose 6-phosphate from D-ribose 5-phosphate and D-xylulose 5-phosphate (non-oxidative stage): step 2/3. Transaldolase is important for the balance of metabolites in the pentose-phosphate pathway. The sequence is that of Transaldolase from Shewanella piezotolerans (strain WP3 / JCM 13877).